A 1581-amino-acid chain; its full sequence is Rho guanine nucleotide exchange factor 5 (1581 aa).

Disordered regions lie at residues 25-54, 159-274, 316-643, 659-700, 741-810, and 829-1051; these read EGIM…TDGH, VSKE…EQKQ, LRDS…RDGI, SEEF…PPTV, HSHP…PEFY, and VPII…GSSD. Residues 41–54 are compositionally biased toward basic and acidic residues; it reads QEDRDPSYKWTDGH. Residues 204–221 are compositionally biased toward polar residues; the sequence is KQLQLEATQENQGQEGFL. A compositionally biased stretch (acidic residues) spans 228–241; that stretch reads GLEEQEGQEVEIQE. Composition is skewed to basic and acidic residues over residues 326–336 and 345–380; these read QESREVEERRV and RLVE…DSGD. A Phosphoserine modification is found at Ser446. The segment covering 474-492 has biased composition (basic and acidic residues); the sequence is LDNRTHNSQQEEFRLRKGI. Over residues 496–507 the composition is skewed to polar residues; that stretch reads SASTSVAPSGTR. A compositionally biased stretch (low complexity) spans 515–531; sequence PNVFSSTATLSPVSSSV. Polar residues-rich tracts occupy residues 569 to 595, 603 to 613, 662 to 685, 748 to 760, and 779 to 791; these read TSDT…NSFP, TPDSLGMSLSF, FTSN…QNSA, TLSS…SKGS, and TPES…TSIP. Pro residues predominate over residues 829–843; sequence VPIIDPSSEPPPLPP. Polar residues-rich tracts occupy residues 867-881, 889-905, and 912-925; these read PNNQ…SVGR, GRST…NNEV, and SNMT…SPTT. A phosphoserine mark is found at Ser953 and Ser969. The segment covering 975-986 has biased composition (basic and acidic residues); the sequence is KNSEKPLHHQLE. Residues Ser1029 and Ser1110 each carry the phosphoserine modification. The DH domain maps to 1158–1342; that stretch reads KLQEAKFELI…EKLIRDCNSN (185 aa). The 114-residue stretch at 1375–1488 folds into the PH domain; that stretch reads LVKSGELTAL…SALAMPREEL (114 aa). The SH3 domain maps to 1494 to 1555; sequence YDSPQVQCLR…PVQQVEFISN (62 aa).

As to quaternary structure, interacts with SRC. Forms a ternary complex with SRC and the PI3K 85 kDa subunit. Interacts with and is activated by the heterodimer formed by GNB1 and GNG2. Interacts with ODAM (via C-terminus). Interacts with RHOA. In terms of processing, activation of SRC induces tyrosine phosphorylation of ARHGEF5.

The protein localises to the nucleus. Its subcellular location is the cytoplasm. It is found in the cell projection. It localises to the podosome. Functionally, guanine nucleotide exchange factor which activates Rho GTPases. Strongly activates RHOA. Also strongly activates RHOB, weakly activates RHOC and RHOG and shows no effect on RHOD, RHOV, RHOQ or RAC1. Involved in regulation of cell shape and actin cytoskeletal organization. Plays a role in actin organization by generating a loss of actin stress fibers and the formation of membrane ruffles and filopodia. Required for SRC-induced podosome formation. Involved in positive regulation of immature dendritic cell migration. The protein is Rho guanine nucleotide exchange factor 5 of Mus musculus (Mouse).